The following is a 63-amino-acid chain: Large ribosomal subunit protein uL30 (63 aa).

This sequence belongs to the universal ribosomal protein uL30 family. Part of the 50S ribosomal subunit.

The chain is Large ribosomal subunit protein uL30 from Xanthomonas campestris pv. campestris (strain 8004).